The primary structure comprises 332 residues: Tryptophan--tRNA ligase (332 aa).

Residues 11-13 (QPS) and 19-20 (GN) contribute to the ATP site. The 'HIGH' region motif lies at 12–20 (PSGELTIGN). L-tryptophan is bound at residue aspartate 135. ATP contacts are provided by residues 147–149 (GQD), valine 186, and 195–199 (KMSKS). Positions 195–199 (KMSKS) match the 'KMSKS' region motif.

The protein belongs to the class-I aminoacyl-tRNA synthetase family. In terms of assembly, homodimer.

It localises to the cytoplasm. It catalyses the reaction tRNA(Trp) + L-tryptophan + ATP = L-tryptophyl-tRNA(Trp) + AMP + diphosphate + H(+). Functionally, catalyzes the attachment of tryptophan to tRNA(Trp). In Shewanella oneidensis (strain ATCC 700550 / JCM 31522 / CIP 106686 / LMG 19005 / NCIMB 14063 / MR-1), this protein is Tryptophan--tRNA ligase.